We begin with the raw amino-acid sequence, 525 residues long: Exoglucanase 1 (525 aa).

A signal peptide spans 1–18 (MRTAKFATLAALVASAAA). Residues 19-467 (QQACSLTTER…AGNGGNNGGN (449 aa)) form a catalytic region. E231 functions as the Nucleophile in the catalytic mechanism. Catalysis depends on E236, which acts as the Proton donor. N-linked (GlcNAc...) asparagine glycosylation is present at N289. The disordered stretch occupies residues 454-492 (GLPGAGNGGNNGGNPPPPTTTTSSAPATTTTASAGPKAG). Gly residues predominate over residues 456 to 465 (PGAGNGGNNG). The linker stretch occupies residues 468 to 489 (PPPPTTTTSSAPATTTTASAGP). Low complexity predominate over residues 473–489 (TTTSSAPATTTTASAGP). Residues 489-525 (PKAGRWQQCGGIGFTGPTQCEEPYICTKLNDWYSQCL) form the CBM1 domain. 2 disulfides stabilise this stretch: C497–C514 and C508–C524.

Belongs to the glycosyl hydrolase 7 (cellulase C) family.

The catalysed reaction is Hydrolysis of (1-&gt;4)-beta-D-glucosidic linkages in cellulose and cellotetraose, releasing cellobiose from the non-reducing ends of the chains.. Functionally, the biological conversion of cellulose to glucose generally requires three types of hydrolytic enzymes: (1) Endoglucanases which cut internal beta-1,4-glucosidic bonds; (2) Exocellobiohydrolases that cut the disaccharide cellobiose from the non-reducing end of the cellulose polymer chain; (3) Beta-1,4-glucosidases which hydrolyze the cellobiose and other short cello-oligosaccharides to glucose. This chain is Exoglucanase 1 (CBH-1), found in Humicola insolens (Soft-rot fungus).